The sequence spans 696 residues: DNA ligase (696 aa).

Residues 36 to 40 (DAEYD), 85 to 86 (SL), and glutamate 123 contribute to the NAD(+) site. The active-site N6-AMP-lysine intermediate is the lysine 125. Positions 146, 181, 319, and 343 each coordinate NAD(+). Residues cysteine 437, cysteine 440, cysteine 455, and cysteine 461 each contribute to the Zn(2+) site. Positions 618–696 (PEGTSLAGKT…EDGLKALLGL (79 aa)) constitute a BRCT domain.

It belongs to the NAD-dependent DNA ligase family. LigA subfamily. It depends on Mg(2+) as a cofactor. Mn(2+) is required as a cofactor.

The catalysed reaction is NAD(+) + (deoxyribonucleotide)n-3'-hydroxyl + 5'-phospho-(deoxyribonucleotide)m = (deoxyribonucleotide)n+m + AMP + beta-nicotinamide D-nucleotide.. Its function is as follows. DNA ligase that catalyzes the formation of phosphodiester linkages between 5'-phosphoryl and 3'-hydroxyl groups in double-stranded DNA using NAD as a coenzyme and as the energy source for the reaction. It is essential for DNA replication and repair of damaged DNA. This chain is DNA ligase, found in Bordetella pertussis (strain Tohama I / ATCC BAA-589 / NCTC 13251).